We begin with the raw amino-acid sequence, 211 residues long: MTTLAMLLTLADSRLPTGAHVHSGGVEEAITAGLVTNLSSLEAFLKRRIRSHGLVTASIAAAVQRGDLAPDGADRETDARTPSPAARDASRSQGRGLVRLARAIWPEADWDALGAKPHLAVAAGRVGALAGLTPEHLALQLVYTTMTGSATAAQRLLALDPTDVAVLTFQLSELCTTTAAEAAIGLADLSDPLLDTLAQHHAERERPLFAS.

Residues 68–93 (LAPDGADRETDARTPSPAARDASRSQ) form a disordered region.

The protein belongs to the UreF family. As to quaternary structure, ureD, UreF and UreG form a complex that acts as a GTP-hydrolysis-dependent molecular chaperone, activating the urease apoprotein by helping to assemble the nickel containing metallocenter of UreC. The UreE protein probably delivers the nickel.

Its subcellular location is the cytoplasm. Its function is as follows. Required for maturation of urease via the functional incorporation of the urease nickel metallocenter. This chain is Urease accessory protein UreF, found in Mycobacterium marinum (strain ATCC BAA-535 / M).